A 302-amino-acid polypeptide reads, in one-letter code: Methionyl-tRNA formyltransferase (302 aa).

Position 107 to 110 (serine 107 to proline 110) interacts with (6S)-5,6,7,8-tetrahydrofolate.

The protein belongs to the Fmt family.

It catalyses the reaction L-methionyl-tRNA(fMet) + (6R)-10-formyltetrahydrofolate = N-formyl-L-methionyl-tRNA(fMet) + (6S)-5,6,7,8-tetrahydrofolate + H(+). In terms of biological role, attaches a formyl group to the free amino group of methionyl-tRNA(fMet). The formyl group appears to play a dual role in the initiator identity of N-formylmethionyl-tRNA by promoting its recognition by IF2 and preventing the misappropriation of this tRNA by the elongation apparatus. The polypeptide is Methionyl-tRNA formyltransferase (Rickettsia massiliae (strain Mtu5)).